The sequence spans 565 residues: Protein NRT1/ PTR FAMILY 5.15 (565 aa).

The next 2 helical transmembrane spans lie at Phe49–Gly67 and Trp80–Gly100. Position 104 is a phosphothreonine (Thr104). 10 helical membrane-spanning segments follow: residues Leu110–Leu130, Ser142–Gly162, Phe189–Ala209, Trp217–Leu237, Ile331–Phe351, Ile368–Tyr388, Leu409–Val429, Ile454–Gly474, Ile490–Ile510, and Tyr534–Ser554.

This sequence belongs to the major facilitator superfamily. Proton-dependent oligopeptide transporter (POT/PTR) (TC 2.A.17) family. As to expression, expressed in shoots, roots and leaves.

It localises to the membrane. This Arabidopsis thaliana (Mouse-ear cress) protein is Protein NRT1/ PTR FAMILY 5.15 (NPF5.15).